Reading from the N-terminus, the 702-residue chain is MTPLSALTSNPAPSPPPKFALGKCPATAIHVVSVLRPNRQRFCYEKTDAGDLIPHKCLICQPILTEKHISPYYAVYSDLLEDFVLFGYNTMTGKMEQFIYAFKTDCFVEVNRPEIKYNPAFLVKGNVVVALNGPEGELVVIERDCRGLLSKESTSYGQFRTLPTAALRTLTLQDLERDRWDRAANSDEVKISSGNESFDRLYAEYQKNLPRFQVRQCLHLNKEFLCVYSKTSGDYTRLEYIDETGDFQKISCTLCTCEVTESNLIPLYVERNASELVIHVHNTENNQIEQYIYDVRTFGFVQVKRNLVYDPKKITSGLNLFMAENIDNRKVYMIMRGRDGRLQKETSGSGGFEKMQPVAVKTFQVQWVEMKTEFEKKKASTERVEPQHPVQTEGEDIMETVLAMVESFNCDLRKELGLTQDQEIPRKAPRVESAETEENIVKNLEKLQIAKDPEEPTTAASEGGNTYGYQELDDTMSEGLLEKEAESKHQDANEPEPVKNVTYEPDVAAMDKKKKRRELKSRLNKINAQIDELEKRRMERAGKKQVVSSSVPSEEAAQVEAPASPALAENTNQISNEETPKIDIFEGYNGSFLFGTNTSKEWIVEDIRNHMVGKLLKAFWPRIQNVEEMNGELFKKLIANARKCETEILEASNDRDEYYRLMQLTVDQILKKTLKKDQRATEHNHQQPTQSSDELAKNHEKN.

The segment at 39–160 (RQRFCYEKTD…KESTSYGQFR (122 aa)) is required for self-association and interaction with pgl-3. 3 short sequence motifs (LIR) span residues 107–110 (FVEV), 247–250 (FQKI), and 298–301 (FGFV). A disordered region spans residues 450–471 (AKDPEEPTTAASEGGNTYGYQE). The span at 458–468 (TAASEGGNTYG) shows a compositional bias: polar residues. The LIR 4 signature appears at 469 to 472 (YQEL). The stretch at 508–543 (AAMDKKKKRRELKSRLNKINAQIDELEKRRMERAGK) forms a coiled coil. The interval 545–564 (QVVSSSVPSEEAAQVEAPAS) is disordered. The KIX domain occupies 597 to 674 (NTSKEWIVED…TVDQILKKTL (78 aa)). The segment covering 675–685 (KKDQRATEHNH) has biased composition (basic and acidic residues). The segment at 675 to 702 (KKDQRATEHNHQQPTQSSDELAKNHEKN) is disordered.

In terms of assembly, self-associates. Interacts (via the LIR motifs) with lgg-1; the interaction is direct. Interacts (via the LIR motifs) with lgg-2; the interaction is direct. Interacts with pgl-3; interaction is enhanced in the presence of RNA. Interacts with epg-2; may be modulated by prmt-1. In terms of processing, degraded by autophagy.

It is found in the nucleus. It localises to the cytoplasm. The protein localises to the cytoplasmic granule. Adapter protein that connects P-granules in somatic cells with the autophagic machinery. Association with other adapters such as epg-2 and P-granule components such as pgl-3 is required for the accumulation and degradation of P-granules by autophagy in somatic cells. This ensures exclusive localization of the P-granules in germ cells. The protein is Protein sepa-1 of Caenorhabditis elegans.